The following is a 317-amino-acid chain: Small ribosomal subunit protein RACK1 (317 aa).

WD repeat units lie at residues 15 to 55 (GHNG…DNQY), 64 to 103 (GHSH…TTQR), 106 to 146 (GHKG…ATLT), 148 to 188 (HNDW…VNAD), 191 to 230 (GHTG…TLYT), 232 to 272 (EAKA…DELK), and 281 to 317 (AKDP…TPSA).

This sequence belongs to the WD repeat G protein beta family. Ribosomal protein RACK1 subfamily. As to quaternary structure, component of the small ribosomal subunit. Mature ribosomes consist of a small (40S) and a large (60S) subunit. The 40S subunit contains about 32 different proteins and 1 molecule of RNA (18S). The 60S subunit contains 45 different proteins and 3 molecules of RNA (25S, 5.8S and 5S).

It localises to the cytoplasm. Functionally, component of the ribosome, a large ribonucleoprotein complex responsible for the synthesis of proteins in the cell. The small ribosomal subunit (SSU) binds messenger RNAs (mRNAs) and translates the encoded message by selecting cognate aminoacyl-transfer RNA (tRNA) molecules. The large subunit (LSU) contains the ribosomal catalytic site termed the peptidyl transferase center (PTC), which catalyzes the formation of peptide bonds, thereby polymerizing the amino acids delivered by tRNAs into a polypeptide chain. The nascent polypeptides leave the ribosome through a tunnel in the LSU and interact with protein factors that function in enzymatic processing, targeting, and the membrane insertion of nascent chains at the exit of the ribosomal tunnel. Located at the head of the 40S ribosomal subunit in the vicinity of the mRNA exit channel, it serves as a scaffold protein that can recruit other proteins to the ribosome. Involved in the negative regulation of translation of a specific subset of proteins. Plays a role in morphogenesis and pathogenesis. This chain is Small ribosomal subunit protein RACK1, found in Candida albicans (strain SC5314 / ATCC MYA-2876) (Yeast).